Reading from the N-terminus, the 62-residue chain is High-potential iron-sulfur protein (62 aa).

4 residues coordinate [4Fe-4S] cluster: Cys22, Cys25, Cys40, and Cys55.

The protein belongs to the high-potential iron-sulfur protein (HiPIP) family. Homodimer.

Its function is as follows. Specific class of high-redox-potential 4Fe-4S ferredoxins. Functions in anaerobic electron transport in most purple and in some other photosynthetic bacteria and in at least one genus (Paracoccus) of halophilic, denitrifying bacteria. The chain is High-potential iron-sulfur protein (hip) from Rhodocyclus tenuis (Rhodospirillum tenue).